The primary structure comprises 396 residues: 1-deoxy-D-xylulose 5-phosphate reductoisomerase (396 aa).

8 residues coordinate NADPH: Thr10, Gly11, Ser12, Ile13, Gly36, Lys37, Asn38, and Asn124. Lys125 serves as a coordination point for 1-deoxy-D-xylulose 5-phosphate. Residue Glu126 coordinates NADPH. Asp150 is a binding site for Mn(2+). Residues Ser151, Glu152, Ser186, and His209 each coordinate 1-deoxy-D-xylulose 5-phosphate. Glu152 lines the Mn(2+) pocket. Gly215 contacts NADPH. Ser222, Asn227, Lys228, and Glu231 together coordinate 1-deoxy-D-xylulose 5-phosphate. Residue Glu231 participates in Mn(2+) binding.

It belongs to the DXR family. Mg(2+) serves as cofactor. It depends on Mn(2+) as a cofactor.

It catalyses the reaction 2-C-methyl-D-erythritol 4-phosphate + NADP(+) = 1-deoxy-D-xylulose 5-phosphate + NADPH + H(+). It functions in the pathway isoprenoid biosynthesis; isopentenyl diphosphate biosynthesis via DXP pathway; isopentenyl diphosphate from 1-deoxy-D-xylulose 5-phosphate: step 1/6. Its function is as follows. Catalyzes the NADPH-dependent rearrangement and reduction of 1-deoxy-D-xylulose-5-phosphate (DXP) to 2-C-methyl-D-erythritol 4-phosphate (MEP). This Haemophilus ducreyi (strain 35000HP / ATCC 700724) protein is 1-deoxy-D-xylulose 5-phosphate reductoisomerase.